A 219-amino-acid polypeptide reads, in one-letter code: Mediator of RNA polymerase II transcription subunit 18 (219 aa).

This sequence belongs to the Mediator complex subunit 18 family. As to quaternary structure, component of the Mediator complex. Interacts with YY1 to suppress disease susceptibility via the repression of genes glutaredoxins GRX480, GRXS13 and thioredoxin TRX-h5. Binds to ABI4 to regulate abscisic acid responses; recruited by ABI4 to ABI5 promoter in the presence of abscisic acid (ABA). Interacts with SUF4 to regulate flowering time; recruited by SUF4 to FLC promoter.

It localises to the nucleus. In terms of biological role, component of the Mediator complex, a coactivator involved in the regulated transcription of nearly all RNA polymerase II-dependent genes. Mediator functions as a bridge to convey information from gene-specific regulatory proteins to the basal RNA polymerase II transcription machinery. The Mediator complex, having a compact conformation in its free form, is recruited to promoters by direct interactions with regulatory proteins and serves for the assembly of a functional pre-initiation complex with RNA polymerase II and the general transcription factors. Involved in the regulation of histone H3 lysine tri-methylation (H3K36me3). Associates with the promoter, coding and terminator regions of target genes suggesting its function in transcription initiation, elongation and termination. Multifunctional protein which regulates plant immunity, especially during necrotrophic fungal infection (e.g. B.cinerea and A.brassicicola), flowering time and responses to hormones (e.g. abscisic acid ABA and ethylene) through interactions with distinct transcription factors. The polypeptide is Mediator of RNA polymerase II transcription subunit 18 (Arabidopsis thaliana (Mouse-ear cress)).